A 206-amino-acid polypeptide reads, in one-letter code: Small ribosomal subunit protein uS4 (206 aa).

The S4 RNA-binding domain maps to glycine 96 to alanine 158.

This sequence belongs to the universal ribosomal protein uS4 family. Part of the 30S ribosomal subunit. Contacts protein S5. The interaction surface between S4 and S5 is involved in control of translational fidelity.

One of the primary rRNA binding proteins, it binds directly to 16S rRNA where it nucleates assembly of the body of the 30S subunit. Functionally, with S5 and S12 plays an important role in translational accuracy. The polypeptide is Small ribosomal subunit protein uS4 (Aliivibrio fischeri (strain ATCC 700601 / ES114) (Vibrio fischeri)).